Here is a 202-residue protein sequence, read N- to C-terminus: Protein G1-like4 (202 aa).

Disordered regions lie at residues 1–44 and 158–202; these read MDLS…RYEA and RARG…GAAC. Gly residues predominate over residues 12-22; it reads SGGGNGGGGGS. A compositionally biased stretch (low complexity) spans 23-36; the sequence is SSSNSSPSMGAGAP. Residues 41-168 form the ALOG domain; it reads RYEAQKRRDW…ARGVSYEKKK (128 aa). The short motif at 166 to 170 is the Nuclear localization signal element; sequence KKKRK. Over residues 173-186 the composition is skewed to low complexity; sequence QQQQLQGGDSSGLH. Over residues 192-202 the composition is skewed to pro residues; that stretch reads PPPPPPAGAAC.

This sequence belongs to the plant homeotic and developmental regulators ALOG protein family.

It localises to the nucleus. In terms of biological role, probable transcription regulator that acts as a developmental regulator by promoting cell growth in response to light. The chain is Protein G1-like4 from Oryza sativa subsp. indica (Rice).